Reading from the N-terminus, the 353-residue chain is MAAELAMGAELPSSPLAIEYVNDFDLMKFEVKKEPPEAERFCHRLPPGSLSSTPLSTPCSSVPSSPSFCAPSPGTGGGGGAGGGGGSSQAGGAPGPPSGGPGAVGGTSGKPALEDLYWMSGYQHHLNPEALNLTPEDAVEALIGSGHHGAHHGAHHPAAAAAYEAFRGPGFAGGGGADDMGAGHHHGAHHAAHHHHAAHHHHHHHHHHGGAGHGGGAGHHVRLEERFSDDQLVSMSVRELNRQLRGFSKEEVIRLKQKRRTLKNRGYAQSCRFKRVQQRHILESEKCQLQSQVEQLKLEVGRLAKERDLYKEKYEKLAGRGGPGSAGGAGFPREPSPPQAGPGGAKGTADFFL.

S14 is subject to Phosphoserine. A Glycyl lysine isopeptide (Lys-Gly) (interchain with G-Cter in SUMO2) cross-link involves residue K32. Disordered stretches follow at residues 40–108 (RFCH…GGTS) and 177–219 (ADDM…GAGH). The span at 46–73 (PPGSLSSTPLSTPCSSVPSSPSFCAPSP) shows a compositional bias: low complexity. S49 is subject to Phosphoserine. Phosphothreonine is present on residues T53 and T57. A phosphoserine mark is found at S61 and S65. Gly residues predominate over residues 74-93 (GTGGGGGAGGGGGSSQAGGA). Over residues 183–210 (GHHHGAHHAAHHHHAAHHHHHHHHHHGG) the composition is skewed to basic residues. A basic motif region spans residues 254-279 (RLKQKRRTLKNRGYAQSCRFKRVQQR). A bZIP domain is found at 254 to 317 (RLKQKRRTLK…DLYKEKYEKL (64 aa)). The leucine-zipper stretch occupies residues 282 to 303 (LESEKCQLQSQVEQLKLEVGRL). Positions 315–353 (EKLAGRGGPGSAGGAGFPREPSPPQAGPGGAKGTADFFL) are disordered. Gly residues predominate over residues 319-330 (GRGGPGSAGGAG).

Belongs to the bZIP family. Maf subfamily. Forms homodimers or heterodimers. Monomers and dimers are able to bind DNA, but the off-rate is faster for monomers. Interacts with NEUROD1 and PDX1. May interact with MAFB, FOS, JUN and PCAF. In terms of processing, ubiquitinated, leading to its degradation by the proteasome. Post-translationally, phosphorylated at tyrosines. Expressed in the islets of Langerhans (at protein level).

It is found in the nucleus. Functionally, transcription factor that activates insulin gene expression. Acts synergistically with NEUROD1/BETA2 and PDX1. Binds the insulin enhancer C1/RIPE3b element. Binds to consensus TRE-type MARE 5'-TGCTGACTCAGCA-3' DNA sequence. In Homo sapiens (Human), this protein is Transcription factor MafA (MAFA).